We begin with the raw amino-acid sequence, 197 residues long: 3-isopropylmalate dehydratase small subunit (197 aa).

It belongs to the LeuD family. LeuD type 1 subfamily. In terms of assembly, heterodimer of LeuC and LeuD.

It catalyses the reaction (2R,3S)-3-isopropylmalate = (2S)-2-isopropylmalate. It participates in amino-acid biosynthesis; L-leucine biosynthesis; L-leucine from 3-methyl-2-oxobutanoate: step 2/4. Catalyzes the isomerization between 2-isopropylmalate and 3-isopropylmalate, via the formation of 2-isopropylmaleate. This chain is 3-isopropylmalate dehydratase small subunit, found in Azobacteroides pseudotrichonymphae genomovar. CFP2.